We begin with the raw amino-acid sequence, 890 residues long: MSATRSQRSSTISPARPRRSPATIPMKRPETPSSSHFSASPVTSSSPLLRSSPSPSTSSAAASSTAVASTKLKENITVTIRFRPLSPREVNNGDEIAWYADGDYTIRNEYNPSLCYGFDRVFGPPTTTRRVYDIAAQQVVSGAMSGINGTVFAYGVTSSGKTHTMHGEQRSPGIIPLAVKDVFSIIQETPEREFLLRVSYLEIYNEVINDLLDPTGQNLRIREDSQGTYVEGIKDEVVLSPAHALSLIASGEEHRHVGSNNVNLFSSRSHTMFTLTIESSPHGKGDDGEDVSLSQLHLIDLAGSESSKTEITGQRRKEGSSINKSLLTLGTVISKLTDTKAAHIPYRDSKLTRLLQSTLSGHGRVSLICTITPASSTSEETHNTLKFAQRCKHVEIKASRNKIMDEKSLIKKYQKEISCLQEELTQLRHGNQDDLADRKLQVKLQSRLEDDEEAKAALMGRIQRLTKLILVSTKSSLQAASVKPDHIWRQAFGEDELAYLPDRRRENMADDGAVSTVSEHLKEPRDGNSSLDEMTKDRRKNKTRGMLGWLKLKKSDGVAGTLPTDGNQSQASGSPSSSSKYTQTKTTRRENAAAIKSIPEKTVAGDLFSATVGPEDSSPTGTTIADQMDLLHEQTKILVGEVALRTSSLNRLSEQAARNPEDFHIRDQIQKLEDEISEKKDQIRVLEQQIIEIFGMTPYASDSLGMPQVLSKLTMQLNEKIFEHEIKSADNRILQEQLQMTKSENAEMQETIILLRQQLDSLAERQSTQQIAGDESSGKNIHNRNGEESEIYSGAGTPTSVMSLNRVFAQEETKEIYNETALNSQALEIENLKKEKMRLIEEKDELGKLNKKLTEEASYAKELASAAAVELQNLAEEVTRLCNENAKLSR.

A compositionally biased stretch (polar residues) spans 1–13 (MSATRSQRSSTIS). The interval 1–66 (MSATRSQRSS…TSSAAASSTA (66 aa)) is disordered. Residues 1-73 (MSATRSQRSS…STAVASTKLK (73 aa)) constitute a mitochondrion transit peptide. Low complexity predominate over residues 40 to 66 (SPVTSSSPLLRSSPSPSTSSAAASSTA). A Kinesin motor domain is found at 75–394 (NITVTIRFRP…LKFAQRCKHV (320 aa)). 155–162 (GVTSSGKT) provides a ligand contact to ATP. A coiled-coil region spans residues 395–468 (EIKASRNKIM…MGRIQRLTKL (74 aa)). Residues 511-595 (DGAVSTVSEH…TTRRENAAAI (85 aa)) are disordered. The span at 569–579 (SQASGSPSSSS) shows a compositional bias: low complexity. Coiled-coil stretches lie at residues 664 to 693 (HIRD…IIEI) and 729 to 765 (ADNR…LAER). Positions 768–797 (TQQIAGDESSGKNIHNRNGEESEIYSGAGT) are disordered. Positions 818–884 (NETALNSQAL…AEEVTRLCNE (67 aa)) form a coiled coil.

Belongs to the TRAFAC class myosin-kinesin ATPase superfamily. Kinesin family. KIN-7 subfamily.

The protein localises to the mitochondrion. This is Kinesin-like protein KIN-7C, mitochondrial from Arabidopsis thaliana (Mouse-ear cress).